Reading from the N-terminus, the 361-residue chain is Queuine tRNA-ribosyltransferase (361 aa).

Asp92 (proton acceptor) is an active-site residue. Substrate contacts are provided by residues 92-96 (DSGGF), Asp146, Gln189, and Gly216. The RNA binding stretch occupies residues 247-253 (GVGKPAD). Catalysis depends on Asp266, which acts as the Nucleophile. Residues 271–275 (TRSGR) form an RNA binding; important for wobble base 34 recognition region. Cys304, Cys306, Cys309, and His335 together coordinate Zn(2+).

It belongs to the queuine tRNA-ribosyltransferase family. Homodimer. Within each dimer, one monomer is responsible for RNA recognition and catalysis, while the other monomer binds to the replacement base PreQ1. It depends on Zn(2+) as a cofactor.

It catalyses the reaction 7-aminomethyl-7-carbaguanine + guanosine(34) in tRNA = 7-aminomethyl-7-carbaguanosine(34) in tRNA + guanine. Its pathway is tRNA modification; tRNA-queuosine biosynthesis. Its function is as follows. Catalyzes the base-exchange of a guanine (G) residue with the queuine precursor 7-aminomethyl-7-deazaguanine (PreQ1) at position 34 (anticodon wobble position) in tRNAs with GU(N) anticodons (tRNA-Asp, -Asn, -His and -Tyr). Catalysis occurs through a double-displacement mechanism. The nucleophile active site attacks the C1' of nucleotide 34 to detach the guanine base from the RNA, forming a covalent enzyme-RNA intermediate. The proton acceptor active site deprotonates the incoming PreQ1, allowing a nucleophilic attack on the C1' of the ribose to form the product. After dissociation, two additional enzymatic reactions on the tRNA convert PreQ1 to queuine (Q), resulting in the hypermodified nucleoside queuosine (7-(((4,5-cis-dihydroxy-2-cyclopenten-1-yl)amino)methyl)-7-deazaguanosine). In Rickettsia felis (strain ATCC VR-1525 / URRWXCal2) (Rickettsia azadi), this protein is Queuine tRNA-ribosyltransferase.